The following is a 412-amino-acid chain: 5,5'-dehydrodivanillate O-demethylase ferredoxin reductase subunit (412 aa).

FAD contacts are provided by Ala-14, Lys-49, Val-82, Arg-130, Asp-279, and Val-298.

Belongs to the FAD-dependent oxidoreductase family. Monomer. The three-component monooxygenase is composed of an oxygenase (LigXa), a ferredoxin (LigXc) and a ferredoxin reductase (LigXd). The cofactor is FAD.

The catalysed reaction is 5,5'-dehydrodivanillate + NADH + O2 + H(+) = 2,2',3-trihydroxy-3'-methoxy-5,5'-dicarboxybiphenyl + formaldehyde + NAD(+) + H2O. Involved in the catabolism of 5,5'-dehydrodivanillate (DDVA), an intermediate in the biodegradation of lignin. Part of a three-component monooxygenase that catalyzes the O-demethylation of DDVA, leading to the formation of 2,2',3-trihydroxy-3'-methoxy-5,5'-dicarboxybiphenyl (OH-DDVA). LigXd probably transfers the electrons from NADH to LigXc. This chain is 5,5'-dehydrodivanillate O-demethylase ferredoxin reductase subunit, found in Sphingobium sp. (strain NBRC 103272 / SYK-6).